Consider the following 135-residue polypeptide: uncharacterized protein (135 aa).

Belongs to the transcriptional regulatory CopG/NikR family.

This is an uncharacterized protein from Methanocaldococcus jannaschii (strain ATCC 43067 / DSM 2661 / JAL-1 / JCM 10045 / NBRC 100440) (Methanococcus jannaschii).